Reading from the N-terminus, the 208-residue chain is 3,4-dihydroxy-2-butanone 4-phosphate synthase (208 aa).

A Phosphothreonine modification is found at Thr3. Residue Glu27 participates in Mg(2+) binding. A D-ribulose 5-phosphate-binding site is contributed by Asp31. At Cys56 the chain carries S-glutathionyl cysteine; by GRX2. D-ribulose 5-phosphate is bound by residues Thr88 and Arg145–Thr149. Mg(2+) is bound at residue His148.

It belongs to the DHBP synthase family. As to quaternary structure, homodimer. It depends on Mg(2+) as a cofactor. Mn(2+) is required as a cofactor. Post-translationally, S-glutathionylation of Cys-56 is reversible and dependent on the cytoplasmic isoform of glutaredoxin-2.

The protein localises to the cytoplasm. It localises to the nucleus. It is found in the mitochondrion intermembrane space. The catalysed reaction is D-ribulose 5-phosphate = (2S)-2-hydroxy-3-oxobutyl phosphate + formate + H(+). It participates in cofactor biosynthesis; riboflavin biosynthesis; 2-hydroxy-3-oxobutyl phosphate from D-ribulose 5-phosphate: step 1/1. In terms of biological role, catalyzes the conversion of D-ribulose 5-phosphate to formate and 3,4-dihydroxy-2-butanone 4-phosphate. Also has an unrelated function in expression of mitochondrial respiration. In Saccharomyces cerevisiae (strain ATCC 204508 / S288c) (Baker's yeast), this protein is 3,4-dihydroxy-2-butanone 4-phosphate synthase (RIB3).